The following is a 293-amino-acid chain: Phosphate-binding protein PstS 2 (293 aa).

Positions 1 to 23 (MKKHKMLSLLAVSGLMGIGILAG) are cleaved as a signal peptide. Cysteine 24 carries N-palmitoyl cysteine lipidation. The S-diacylglycerol cysteine moiety is linked to residue cysteine 24.

Belongs to the PstS family. In terms of assembly, the complex is composed of two ATP-binding proteins (PstB), two transmembrane proteins (PstC and PstA) and a solute-binding protein (PstS).

Its subcellular location is the cell membrane. In terms of biological role, part of the ABC transporter complex PstSACB involved in phosphate import. The protein is Phosphate-binding protein PstS 2 (pstS2) of Streptococcus agalactiae serotype III (strain NEM316).